We begin with the raw amino-acid sequence, 151 residues long: Transcriptional repressor NrdR (151 aa).

Positions 1–24 (MRCPKCQHNGTRVLDSRPSDESRS) are disordered. Residues 3–34 (CPKCQHNGTRVLDSRPSDESRSIKRRRECEKC) fold into a zinc finger. Basic and acidic residues predominate over residues 14-24 (LDSRPSDESRS). Residues 49-139 (LLIIKKDGMR…VYRQFKDINV (91 aa)) enclose the ATP-cone domain.

It belongs to the NrdR family. Zn(2+) is required as a cofactor.

In terms of biological role, negatively regulates transcription of bacterial ribonucleotide reductase nrd genes and operons by binding to NrdR-boxes. This Shouchella clausii (strain KSM-K16) (Alkalihalobacillus clausii) protein is Transcriptional repressor NrdR.